The primary structure comprises 238 residues: Uridylate kinase (238 aa).

12 to 15 (KLSG) provides a ligand contact to ATP. Glycine 54 lines the UMP pocket. 2 residues coordinate ATP: glycine 55 and arginine 59. UMP-binding positions include aspartate 74 and 135 to 142 (TGNPYFTT). 3 residues coordinate ATP: threonine 162, tyrosine 168, and aspartate 171.

It belongs to the UMP kinase family. As to quaternary structure, homohexamer.

It is found in the cytoplasm. It carries out the reaction UMP + ATP = UDP + ADP. Its pathway is pyrimidine metabolism; CTP biosynthesis via de novo pathway; UDP from UMP (UMPK route): step 1/1. With respect to regulation, inhibited by UTP. Functionally, catalyzes the reversible phosphorylation of UMP to UDP. The protein is Uridylate kinase of Lawsonia intracellularis (strain PHE/MN1-00).